We begin with the raw amino-acid sequence, 515 residues long: Bifunctional purine biosynthesis protein PurH (515 aa).

Residues 1–145 (MTKRALISVS…KNHASVTVVV (145 aa)) form the MGS-like domain.

This sequence belongs to the PurH family.

It catalyses the reaction (6R)-10-formyltetrahydrofolate + 5-amino-1-(5-phospho-beta-D-ribosyl)imidazole-4-carboxamide = 5-formamido-1-(5-phospho-D-ribosyl)imidazole-4-carboxamide + (6S)-5,6,7,8-tetrahydrofolate. It carries out the reaction IMP + H2O = 5-formamido-1-(5-phospho-D-ribosyl)imidazole-4-carboxamide. The protein operates within purine metabolism; IMP biosynthesis via de novo pathway; 5-formamido-1-(5-phospho-D-ribosyl)imidazole-4-carboxamide from 5-amino-1-(5-phospho-D-ribosyl)imidazole-4-carboxamide (10-formyl THF route): step 1/1. It functions in the pathway purine metabolism; IMP biosynthesis via de novo pathway; IMP from 5-formamido-1-(5-phospho-D-ribosyl)imidazole-4-carboxamide: step 1/1. This Streptococcus mutans serotype c (strain ATCC 700610 / UA159) protein is Bifunctional purine biosynthesis protein PurH.